Here is a 494-residue protein sequence, read N- to C-terminus: Solute carrier family 2, facilitated glucose transporter member 3 (494 aa).

Residues 1–10 (MGTTKVTTPL) lie on the Cytoplasmic side of the membrane. Residues 11-32 (IFAISIATIGSFQFGYNTGVIN) traverse the membrane as a helical segment. The Extracellular portion of the chain corresponds to 33-64 (APEAIIKDFLNYTLEERSETPPSSVLLTSLWS). N-linked (GlcNAc...) asparagine glycosylation is present at N43. Residues 65-85 (LSVAIFSVGGMIGSFSVGLFV) form a helical membrane-spanning segment. Topologically, residues 86–90 (NRFGR) are cytoplasmic. A helical membrane pass occupies residues 91–111 (RNSMLIVNLLAIAGGCLMGFC). Topologically, residues 112-118 (KIAESVE) are extracellular. Residues 119 to 142 (MLILGRLIIGLFCGLCTGFVPMYI) traverse the membrane as a helical segment. Topologically, residues 143 to 153 (GEISPTALRGA) are cytoplasmic. A helical transmembrane segment spans residues 154-174 (FGTLNQLGIVIGILVAQIFGL). Q159 lines the D-glucose pocket. Over 175-183 (KVILGTEDL) the chain is Extracellular. A helical transmembrane segment spans residues 184–204 (WPLLLGFTILPAIIQCAALPF). The Cytoplasmic segment spans residues 205–269 (CPESPRFLLI…LFRAPNYRQP (65 aa)). Position 232 is a phosphothreonine (T232). The helical transmembrane segment at 270 to 290 (IIISIMLQLSQQLSGINAVFY) threads the bilayer. The interval 277 to 279 (QLS) is important for selectivity against fructose. Residues 280 to 281 (QQ) and N286 each bind D-glucose. Topologically, residues 291–304 (YSTGIFKDAGVQEP) are extracellular. A helical transmembrane segment spans residues 305–325 (VYATIGAGVVNTIFTVVSVFL). A D-glucose-binding site is contributed by N315. Residues 326 to 331 (VERAGR) are Cytoplasmic-facing. The chain crosses the membrane as a helical span at residues 332–352 (RTLHLIGLGGMAFCSILMTIS). Over 353-363 (LLLKDNYSWMS) the chain is Extracellular. The helical transmembrane segment at 364–389 (FICIGAILVFVAFFEIGPGPIPWFIV) threads the bilayer. D-glucose contacts are provided by E378 and W386. At 390–399 (AELFGQGPRP) the chain is on the cytoplasmic side. Residues 400 to 420 (AAMAVAGCSNWTSNFLVGLLF) form a helical membrane-spanning segment. The Extracellular segment spans residues 421–429 (PSATFYLGA). The chain crosses the membrane as a helical span at residues 430–450 (YVFIVFTVFLVIFWVFTFFKV). At 451-494 (PETRGRTFEEITRAFEGQVQTGTRGEKGPIMEMNSIQPTKDTNA) the chain is on the cytoplasmic side. Residues 473–494 (TRGEKGPIMEMNSIQPTKDTNA) form a disordered region. Polar residues predominate over residues 484–494 (NSIQPTKDTNA). S485 carries the phosphoserine modification. T492 is subject to Phosphothreonine.

This sequence belongs to the major facilitator superfamily. Sugar transporter (TC 2.A.1.1) family. Glucose transporter subfamily. Interacts with SMIM43; the interaction may promote SLC2A3-mediated glucose transport to meet the energy needs of mesendoderm differentiation. As to expression, detected in placenta.

Its subcellular location is the cell membrane. The protein localises to the perikaryon. It is found in the cell projection. The catalysed reaction is D-glucose(out) = D-glucose(in). The enzyme catalyses D-galactose(in) = D-galactose(out). Deoxyglucose transport is inhibited by D-glucose, D-galactose and maltose. Galactose transport is inhibited by D-glucose and maltose. Facilitative glucose transporter. Can also mediate the uptake of various other monosaccharides across the cell membrane. Mediates the uptake of glucose, 2-deoxyglucose, galactose, mannose, xylose and fucose, and probably also dehydroascorbate. Does not mediate fructose transport. Required for mesendoderm differentiation. The polypeptide is Solute carrier family 2, facilitated glucose transporter member 3 (Ovis aries (Sheep)).